A 142-amino-acid polypeptide reads, in one-letter code: uncharacterized protein (142 aa).

Residues 2–142 (IHMKQLTSKE…IESYLFRKPV (141 aa)) form the N-acetyltransferase domain.

This sequence belongs to the acetyltransferase family.

This is an uncharacterized protein from Bacillus subtilis (strain 168).